Here is a 22-residue protein sequence, read N- to C-terminus: Motilin (22 aa).

Residues 1–11 (FVPFFTQSDIQ) are compositionally biased toward polar residues. The interval 1 to 22 (FVPFFTQSDIQKMQEKERNKGQ) is disordered. Residues 12 to 22 (KMQEKERNKGQ) show a composition bias toward basic and acidic residues.

Belongs to the motilin family.

It localises to the secreted. Functionally, plays an important role in the regulation of interdigestive gastrointestinal motility and indirectly causes rhythmic contraction of duodenal and colonic smooth muscle. The protein is Motilin (MLN) of Gallus gallus (Chicken).